Reading from the N-terminus, the 763-residue chain is ATP-dependent RNA helicase SUPV3L1, mitochondrial (763 aa).

The N-terminal 65 residues, 1–65 (MSVNRCIYLL…RPLDTSLFIP (65 aa)), are a transit peptide targeting the mitochondrion. Positions 39–58 (RRTFDKLSTRHSSSGSSRPL) are disordered. Positions 192–332 (EARAIQRKIV…AVDFITELMF (141 aa)) constitute a Helicase ATP-binding domain. Residue 205–212 (GPTNSGKT) coordinates ATP. Residues 354-519 (HAVESLDNLK…PTAEQIEMFA (166 aa)) form the Helicase C-terminal domain. 2 disordered regions span residues 679 to 721 (DSQP…KSSL) and 742 to 763 (EWAR…RKKK). Residues 680 to 697 (SQPTDTESNSSSTVPESE) show a composition bias toward polar residues.

This sequence belongs to the helicase family. Mg(2+) is required as a cofactor. Mn(2+) serves as cofactor.

Its subcellular location is the nucleus. It localises to the mitochondrion matrix. It is found in the mitochondrion nucleoid. It carries out the reaction ATP + H2O = ADP + phosphate + H(+). Functionally, major helicase player in mitochondrial RNA metabolism. Component of the mitochondrial degradosome (mtEXO) complex, that degrades 3' overhang double-stranded RNA with a 3'-to-5' directionality in an ATP-dependent manner. ATPase and ATP-dependent multisubstrate helicase, able to unwind double-stranded (ds) DNA and RNA, and RNA/DNA heteroduplexes in the 5'-to-3' direction. Plays a role in the RNA surveillance system in mitochondria; regulates the stability of mature mRNAs, the removal of aberrantly formed mRNAs and the rapid degradation of non coding processing intermediates. Also implicated in recombination and chromatin maintenance pathways. May protect cells from apoptosis. Associates with mitochondrial DNA. The protein is ATP-dependent RNA helicase SUPV3L1, mitochondrial (supv3l1) of Danio rerio (Zebrafish).